A 165-amino-acid polypeptide reads, in one-letter code: Regulator of sigma D (165 aa).

The protein belongs to the Rsd/AlgQ family. In terms of assembly, interacts with RpoD.

The protein resides in the cytoplasm. Functionally, binds RpoD and negatively regulates RpoD-mediated transcription activation by preventing the interaction between the primary sigma factor RpoD with the catalytic core of the RNA polymerase and with promoter DNA. May be involved in replacement of the RNA polymerase sigma subunit from RpoD to RpoS during the transition from exponential growth to the stationary phase. In Enterobacter sp. (strain 638), this protein is Regulator of sigma D.